Reading from the N-terminus, the 3135-residue chain is Beauvericin nonribosomal cyclodepsipeptide synthetase BEA1 (3135 aa).

A condensation 1 region spans residues His70–Leu458. The disordered stretch occupies residues Leu196–Gly228. Residues Ser499–Arg896 form an adenylation 1 region. Positions Ser1021–Ala1097 constitute a Carrier 1 domain. Ser1058 is subject to O-(pantetheine 4'-phosphoryl)serine. Residues Ser1115–Thr1542 form a condensation 2 region. Positions Phe1571–Arg1974 are adenylation 2. An S-adenosyl-L-methionine-dependent N-methyltransferase region spans residues Met2042–Val2182. Carrier domains lie at Val2509–Leu2583 and Ala2603–Asp2677. O-(pantetheine 4'-phosphoryl)serine is present on residues Ser2543 and Ser2637. Residues Gln2721 to Thr3127 are condensation 3.

It belongs to the NRP synthetase family.

The enzyme catalyses 3 (R)-2-hydroxy-3-methylbutanoate + 3 L-phenylalanine + 3 S-adenosyl-L-methionine + 6 ATP = beauvericin + 6 AMP + 3 S-adenosyl-L-homocysteine + 6 diphosphate + 6 H(+). Beauvericin nonribosomal cyclodepsipeptide synthetase; part of the gene cluster that mediates the biosynthesis of beauvericin (BEA), a non-ribosomal cyclic hexadepsipeptide that shows antibiotic, antifungal, insecticidal, and cancer cell antiproliferative and antihaptotactic activity. Ketoisovalerate reductase BEA2 catalyzes the NADPH-specific reduction of ketoisovaleric acid to hydroxyisovalerate, a precursor for beauvericin biosynthesis. The nonribosomal cyclodepsipeptide synthetase BEA1 then catalyzes the formation of beauvericin via condensation and cyclization of 3 dipeptidol monomers, each composed of one unit of hydroxyisovalerate and one unit of N-methyl-phenylalanine. The polypeptide is Beauvericin nonribosomal cyclodepsipeptide synthetase BEA1 (Gibberella fujikuroi (strain CBS 195.34 / IMI 58289 / NRRL A-6831) (Bakanae and foot rot disease fungus)).